Reading from the N-terminus, the 458-residue chain is Dynein regulatory complex protein 10 (458 aa).

Coiled-coil stretches lie at residues 96-137 (GQTL…HKVN), 209-255 (IQDI…KNHL), and 285-379 (QVRL…IRAE). An IQ domain is found at 397–426 (MVRAATLIQAVWKGYLVRSILRSKKKKRGK). The segment at 419-458 (SKKKKRGKGKGKDKGKGKEKPKEEKAKEKKPKAKGKGKKK) is disordered. Residues 428-445 (KGKDKGKGKEKPKEEKAK) are compositionally biased toward basic and acidic residues. Residues 446 to 458 (EKKPKAKGKGKKK) are compositionally biased toward basic residues.

It belongs to the DRC10 family. As to quaternary structure, component of the nexin-dynein regulatory complex (N-DRC). Interacts with CFAP52.

Its subcellular location is the cytoplasm. The protein resides in the cytoskeleton. It localises to the flagellum axoneme. Its function is as follows. Component of the nexin-dynein regulatory complex (N-DRC), a key regulator of ciliary/flagellar motility which maintains the alignment and integrity of the distal axoneme and regulates microtubule sliding in motile axonemes. This chain is Dynein regulatory complex protein 10 (Iqcd), found in Mus musculus (Mouse).